Consider the following 591-residue polypeptide: V-type ATP synthase alpha chain (591 aa).

Position 232-239 (glycine 232–threonine 239) interacts with ATP.

It belongs to the ATPase alpha/beta chains family.

It carries out the reaction ATP + H2O + 4 H(+)(in) = ADP + phosphate + 5 H(+)(out). Its function is as follows. Produces ATP from ADP in the presence of a proton gradient across the membrane. The V-type alpha chain is a catalytic subunit. This Nitrosococcus oceani (strain ATCC 19707 / BCRC 17464 / JCM 30415 / NCIMB 11848 / C-107) protein is V-type ATP synthase alpha chain.